Reading from the N-terminus, the 440-residue chain is Doublesex- and mab-3-related transcription factor A2 (440 aa).

Positions 59–106 (CARCRNHGVVSALKGHKRYCRWKDCMCAKCTLIAERQRVMAAQVALRR) form a DNA-binding region, DM. The segment at 167–261 (PKTPLPGTVT…SPSSAASRQM (95 aa)) is disordered. The span at 199–213 (DMRHGSGSENGDRES) shows a compositional bias: basic and acidic residues. A compositionally biased stretch (low complexity) spans 229 to 241 (TPGSISPIGSDSG). The span at 251-261 (PSPSSAASRQM) shows a compositional bias: polar residues. Residues 261-296 (MNAIDILTRVFPNHKRSVLELVLQGCGKNVVQAIEQ) form the DMA domain.

It belongs to the DMRT family. Restrictively expressed in brain and developing germ cells, especially in spermatogonia, spermatocytes, spermatids, and sperm cells, and in developing oocytes, including early perinucleolus stage oocyte, late yolk vesicle stage oocyte, and oil drop stage oocyte.

It localises to the nucleus. In terms of biological role, may be involved in sexual development. The chain is Doublesex- and mab-3-related transcription factor A2 (dmrta2) from Danio rerio (Zebrafish).